The following is a 384-amino-acid chain: GTPase Obg (384 aa).

The region spanning 1 to 159 (MKFIDEAKIE…RSLQLELKVL (159 aa)) is the Obg domain. Residues 20–46 (ATSFRREKFVPRGGPDGGDGGKGGSVW) form a disordered region. A compositionally biased stretch (gly residues) spans 33 to 43 (GPDGGDGGKGG). The region spanning 160–348 (ADVGLLGMPN…LVHQINQYLT (189 aa)) is the OBG-type G domain. GTP is bound by residues 166–173 (GMPNAGKS), 191–195 (FTTLH), 213–216 (DIPG), 284–287 (NKLD), and 329–331 (SAL). Mg(2+) is bound by residues Ser173 and Thr193.

This sequence belongs to the TRAFAC class OBG-HflX-like GTPase superfamily. OBG GTPase family. As to quaternary structure, monomer. The cofactor is Mg(2+).

Its subcellular location is the cytoplasm. In terms of biological role, an essential GTPase which binds GTP, GDP and possibly (p)ppGpp with moderate affinity, with high nucleotide exchange rates and a fairly low GTP hydrolysis rate. Plays a role in control of the cell cycle, stress response, ribosome biogenesis and in those bacteria that undergo differentiation, in morphogenesis control. The sequence is that of GTPase Obg from Neisseria meningitidis serogroup C / serotype 2a (strain ATCC 700532 / DSM 15464 / FAM18).